Here is a 437-residue protein sequence, read N- to C-terminus: Proline--tRNA ligase (437 aa).

This sequence belongs to the class-II aminoacyl-tRNA synthetase family. ProS type 2 subfamily. In terms of assembly, homodimer.

It localises to the cytoplasm. It catalyses the reaction tRNA(Pro) + L-proline + ATP = L-prolyl-tRNA(Pro) + AMP + diphosphate. Its function is as follows. Catalyzes the attachment of proline to tRNA(Pro) in a two-step reaction: proline is first activated by ATP to form Pro-AMP and then transferred to the acceptor end of tRNA(Pro). The sequence is that of Proline--tRNA ligase from Acidiphilium cryptum (strain JF-5).